The chain runs to 121 residues: Small ribosomal subunit protein uS13 (121 aa).

The disordered stretch occupies residues 92–121; the sequence is RKGLPCRGQRTRTNARTRKGPRKAAQSLKK.

This sequence belongs to the universal ribosomal protein uS13 family. In terms of assembly, part of the 30S ribosomal subunit. Forms a loose heterodimer with protein S19. Forms two bridges to the 50S subunit in the 70S ribosome.

Its function is as follows. Located at the top of the head of the 30S subunit, it contacts several helices of the 16S rRNA. In the 70S ribosome it contacts the 23S rRNA (bridge B1a) and protein L5 of the 50S subunit (bridge B1b), connecting the 2 subunits; these bridges are implicated in subunit movement. Contacts the tRNAs in the A and P-sites. In Janthinobacterium sp. (strain Marseille) (Minibacterium massiliensis), this protein is Small ribosomal subunit protein uS13.